The sequence spans 406 residues: MIDVKSIILIVLDGLGDRPGEILGYRTPLQAAYHPNMNRMASLGMTGLMHPISPGIRSGSDTSHMSLLGYDPRVYYQGRGPFEALGLHMDMKPGDLAFRANFATNRDGKIIDRRAGRINAGNDQLASAISIDIGNYKFRVKSGVEHRAALVVSGPNLSDKISDSDPHSEGKPPEPIRPLDPSADSTAKIMNEYLKRIREILRDHPVNVEREKNGQIPGNELLIRSAGKVPDIPSFQEKNGITGACVVGSPWLKGLCRLLGMAVIDVPGAAGTINSNYTGKIKTAIDASKRYDFVLVNIKATDVAGHDGDYELKRRVIEDIDIAMEPLLGQSDRIVVAITGDHSTPCSVKDHSGDPVPIVFYTDGIYSDDVKLFDEVSAMKGALRITTQDVLNILMEMAGRAEKFGS.

The tract at residues 156-183 is disordered; it reads NLSDKISDSDPHSEGKPPEPIRPLDPSA. Over residues 160–174 the composition is skewed to basic and acidic residues; sequence KISDSDPHSEGKPPE.

This sequence belongs to the BPG-independent phosphoglycerate mutase family. A-PGAM subfamily.

The catalysed reaction is (2R)-2-phosphoglycerate = (2R)-3-phosphoglycerate. It participates in carbohydrate degradation; glycolysis; pyruvate from D-glyceraldehyde 3-phosphate: step 3/5. Its function is as follows. Catalyzes the interconversion of 2-phosphoglycerate and 3-phosphoglycerate. In Thermoplasma volcanium (strain ATCC 51530 / DSM 4299 / JCM 9571 / NBRC 15438 / GSS1), this protein is 2,3-bisphosphoglycerate-independent phosphoglycerate mutase.